A 294-amino-acid chain; its full sequence is NAD kinase (294 aa).

Residue D73 is the Proton acceptor of the active site. Residues 73-74 (DG), 147-148 (NE), H158, R175, D177, 188-193 (TAYSLS), and Q249 each bind NAD(+).

It belongs to the NAD kinase family. The cofactor is a divalent metal cation.

Its subcellular location is the cytoplasm. The catalysed reaction is NAD(+) + ATP = ADP + NADP(+) + H(+). Its function is as follows. Involved in the regulation of the intracellular balance of NAD and NADP, and is a key enzyme in the biosynthesis of NADP. Catalyzes specifically the phosphorylation on 2'-hydroxyl of the adenosine moiety of NAD to yield NADP. This is NAD kinase from Aeromonas salmonicida (strain A449).